The primary structure comprises 248 residues: uncharacterized protein (248 aa).

The helical transmembrane segment at 30–50 threads the bilayer; it reads LIALAIFIGLIAIFMFGCKAA. Disordered stretches follow at residues 59–91 and 208–248; these read NRDT…MDPP and TTES…VSTR. 2 stretches are compositionally biased toward polar residues: residues 210-220 and 239-248; these read ESPAPAQSTSN and SLHNETVSTR.

It is found in the membrane. This is an uncharacterized protein from Caenorhabditis elegans.